We begin with the raw amino-acid sequence, 66 residues long: Conotoxin Cal6.38 (66 aa).

Residues 1–22 form the signal peptide; that stretch reads MKLTFVLIVAVLVLAVCNFTVA. 3 cysteine pairs are disulfide-bonded: Cys38-Cys55, Cys45-Cys59, and Cys54-Cys64.

It belongs to the conotoxin O1 superfamily. In terms of tissue distribution, expressed by the venom duct.

Its subcellular location is the secreted. In terms of biological role, probable neurotoxin. This is Conotoxin Cal6.38 from Californiconus californicus (California cone).